A 49-amino-acid polypeptide reads, in one-letter code: Large ribosomal subunit protein bL33D (49 aa).

The protein belongs to the bacterial ribosomal protein bL33 family.

The chain is Large ribosomal subunit protein bL33D (rpmG4) from Enterococcus faecalis (strain ATCC 700802 / V583).